The sequence spans 319 residues: Mitochondrial fission regulator 1-like-A (319 aa).

Positions methionine 1 to threonine 37 are disordered. The span at glutamate 9–arginine 30 shows a compositional bias: basic and acidic residues.

This sequence belongs to the MTFR1 family.

It localises to the mitochondrion outer membrane. In terms of biological role, mitochondrial protein required for adaptation of miochondrial dynamics to metabolic changes. Regulates mitochondrial morphology at steady state and mediates AMPK-dependent stress-induced mitochondrial fragmentation via the control of OPA1 levels. In Xenopus laevis (African clawed frog), this protein is Mitochondrial fission regulator 1-like-A (mtfr1l-a).